The sequence spans 275 residues: Sororin-B (275 aa).

A compositionally biased stretch (basic and acidic residues) spans 1–16 (MSERKKRGSSDADSRR). Disordered regions lie at residues 1-42 (MSER…PAPI) and 63-117 (NTGS…EIDV). Polar residues-rich tracts occupy residues 63–76 (NTGSQFTPKVSNVT) and 93–112 (NAFSEQSQMDPKDVTSQSSA). The KEN box motif lies at 91–93 (KEN). An FGF motif motif is present at residues 186–188 (FGF). The interval 253–275 (VDEWAAIMNAEFDEAEKFDLTVE) is C-terminal Sororin domain.

The protein belongs to the sororin family. Interacts with the APC/C complex. Interacts with the chromatin-bound cohesin complex; the interaction is indirect, occurs after DNA replication and requires acetylation of the cohesin component smc3. Interacts (via the FGF motif) with pds5a and pds5b; the interaction is direct and prevents the interaction of pds5a with wapl. In terms of processing, ubiquitinated by the APC/C complex in G1, leading to its degradation.

The protein resides in the nucleus. It localises to the chromosome. Its subcellular location is the cytoplasm. Its function is as follows. Regulator of sister chromatid cohesion in mitosis stabilizing cohesin complex association with chromatin. May antagonize the action of wapl which stimulates cohesin dissociation from chromatin. Cohesion ensures that chromosome partitioning is accurate in both meiotic and mitotic cells and plays an important role in DNA repair. Required for efficient DNA double-stranded break repair. The protein is Sororin-B (cdca5-b) of Xenopus laevis (African clawed frog).